A 352-amino-acid polypeptide reads, in one-letter code: MDFSVSDNLDDPIEGVSDFSPTSWENGGYLDKVEPEIDKHGSMIPKYKIYTPGANERKFNNYMYMICYGFVEDVERSPESGKRKKIRTIAAYPLGVGKSTSHPQDLLEELCSLKVTVRRTAGATEKIVFGSSGPLHHLLPWKKILTGGSIFNAVKVCRNVDQIQLENQQSLRIFFLSITKLNDSGIYMIPRTMLEFRRNNAIAFNLLVYLKIDADLAKAGIQGSFDKDGTKVASFMLHLGNFVRRAGKYYSVEYCKRKIDRMKLQFSLGSIGGLSLHIKINGVISKRLFAQMGFQKNLCFSLMDINPWLNRLTWNNSCEISRVAAVLQPSVPREFMIYDDVFIDNTGKILKG.

The disordered stretch occupies residues 1–20 (MDFSVSDNLDDPIEGVSDFS).

This sequence belongs to the morbillivirus/respirovirus/rubulavirus M protein family. In terms of assembly, homomultimer. Interacts with host ANP32B; this interaction promotes M nuclear localization.

It localises to the virion. The protein resides in the host cytoplasm. Its subcellular location is the host nucleus. Plays a crucial role in virion assembly and budding. Forms a shell at the inner face of the plasma membrane. In Hendra virus (isolate Horse/Autralia/Hendra/1994), this protein is Matrix protein (M).